A 1096-amino-acid chain; its full sequence is Constitutive coactivator of PPAR-gamma-like protein 2 (1096 aa).

The segment covering 35-59 (QQQHLHRQLPPTAALAPGAPRAARG) has biased composition (low complexity). 3 disordered regions span residues 35-113 (QQQH…PPQL), 508-579 (NYLP…DGEP), and 971-1096 (SRSS…RKED). Position 58 is an omega-N-methylarginine (R58). Residues 82–95 (TRHHHPAHHFHHHG) are compositionally biased toward basic residues. Pro residues predominate over residues 101–113 (LHPPLPPPPPPQL). The segment covering 540–559 (HITEAFHHQPEWGNPNRDRG) has biased composition (basic and acidic residues). An Omega-N-methylarginine modification is found at R977. Composition is skewed to basic and acidic residues over residues 1041 to 1050 (IKEEKSDHRL) and 1076 to 1096 (NREK…RKED). K1042 is covalently cross-linked (Glycyl lysine isopeptide (Lys-Gly) (interchain with G-Cter in SUMO2)).

Belongs to the constitutive coactivator of PPAR-gamma family. In terms of tissue distribution, expressed at low levels in a number of tissues.

This is Constitutive coactivator of PPAR-gamma-like protein 2 (FAM120C) from Homo sapiens (Human).